Reading from the N-terminus, the 261-residue chain is Expansin-B2 (261 aa).

The N-terminal stretch at 1 to 24 is a signal peptide; that stretch reads MAGASAKVVAMLLSVLATYGFAAG. One can recognise an Expansin-like EG45 domain in the interval 51-157; that stretch reads GGACGFKNTN…RRVPCYHRGL (107 aa). Disulfide bonds link Cys54–Cys82, Cys85–Cys152, and Cys90–Cys96. The 87-residue stretch at 170–256 folds into the Expansin-like CBD domain; it reads VYLAVLVEFA…NWRANTNYGS (87 aa).

This sequence belongs to the expansin family. Expansin B subfamily. As to expression, expressed in roots.

It localises to the secreted. The protein resides in the cell wall. The protein localises to the membrane. Its function is as follows. May cause loosening and extension of plant cell walls by disrupting non-covalent bonding between cellulose microfibrils and matrix glucans. No enzymatic activity has been found. May be required for rapid internodal elongation in deepwater rice during submergence. This Oryza sativa subsp. japonica (Rice) protein is Expansin-B2 (EXPB2).